The chain runs to 500 residues: Trehalose-6-phosphate synthase (500 aa).

Arg-28 is a D-glucose 6-phosphate binding site. Residue 48–49 (GG) coordinates UDP-alpha-D-glucose. D-glucose 6-phosphate is bound by residues Tyr-108 and Asp-162. Arg-304 and Lys-309 together coordinate UDP-alpha-D-glucose. Arg-342 contacts D-glucose 6-phosphate. 407–411 (LVAKE) provides a ligand contact to UDP-alpha-D-glucose.

Belongs to the glycosyltransferase 20 family. In terms of assembly, homotetramer.

It carries out the reaction ADP-alpha-D-glucose + D-glucose 6-phosphate = alpha,alpha-trehalose 6-phosphate + ADP + H(+). The enzyme catalyses CDP-alpha-D-glucose + D-glucose 6-phosphate = alpha,alpha-trehalose 6-phosphate + CDP + H(+). The catalysed reaction is GDP-alpha-D-glucose + D-glucose 6-phosphate = alpha,alpha-trehalose 6-phosphate + GDP + H(+). It catalyses the reaction TDP-alpha-D-glucose + D-glucose 6-phosphate = 5-methyl-UDP + alpha,alpha-trehalose 6-phosphate + H(+). It carries out the reaction D-glucose 6-phosphate + UDP-alpha-D-glucose = alpha,alpha-trehalose 6-phosphate + UDP + H(+). Its pathway is glycan biosynthesis; trehalose biosynthesis. Its function is as follows. Probably involved in the osmoprotection via the biosynthesis of trehalose and in the production of glycogen and alpha-glucan via the TreS-Pep2 branch involved in the biosynthesis of maltose-1-phosphate (M1P). Catalyzes the transfer of glucose from UDP-glucose (UDP-Glc) to D-glucose 6-phosphate (Glc-6-P) to form trehalose-6-phosphate. Probably also able to use ADP-Glc, CDP-Glc, GDP-Glc and TDP-Glc as glucosyl donors. The protein is Trehalose-6-phosphate synthase of Mycobacterium bovis (strain ATCC BAA-935 / AF2122/97).